Reading from the N-terminus, the 172-residue chain is Small ribosomal subunit protein uS5 (172 aa).

Residues 17 to 80 (MREKMIAVNR…EECRRNLVKV (64 aa)) enclose the S5 DRBM domain.

The protein belongs to the universal ribosomal protein uS5 family. Part of the 30S ribosomal subunit. Contacts proteins S4 and S8.

In terms of biological role, with S4 and S12 plays an important role in translational accuracy. Functionally, located at the back of the 30S subunit body where it stabilizes the conformation of the head with respect to the body. This Paracidovorax citrulli (strain AAC00-1) (Acidovorax citrulli) protein is Small ribosomal subunit protein uS5.